A 503-amino-acid chain; its full sequence is Probable cytosol aminopeptidase (503 aa).

2 residues coordinate Mn(2+): Lys-270 and Asp-275. The active site involves Lys-282. Mn(2+)-binding residues include Asp-293, Asp-352, and Glu-354. Arg-356 is a catalytic residue.

This sequence belongs to the peptidase M17 family. Mn(2+) serves as cofactor.

It is found in the cytoplasm. It catalyses the reaction Release of an N-terminal amino acid, Xaa-|-Yaa-, in which Xaa is preferably Leu, but may be other amino acids including Pro although not Arg or Lys, and Yaa may be Pro. Amino acid amides and methyl esters are also readily hydrolyzed, but rates on arylamides are exceedingly low.. The catalysed reaction is Release of an N-terminal amino acid, preferentially leucine, but not glutamic or aspartic acids.. Its function is as follows. Presumably involved in the processing and regular turnover of intracellular proteins. Catalyzes the removal of unsubstituted N-terminal amino acids from various peptides. The sequence is that of Probable cytosol aminopeptidase from Enterobacter sp. (strain 638).